Reading from the N-terminus, the 1050-residue chain is FHIP family protein GE18198 (1050 aa).

Phosphoserine is present on residues Ser-498 and Ser-805. 4 disordered regions span residues 800–827 (KGNE…GQLR), 865–888 (TSMF…SASS), 911–954 (TDGR…SGSN), and 968–995 (SNTT…SEPA). The span at 808 to 826 (HHSQQQQMATNSGQQQGQL) shows a compositional bias: polar residues. Positions 872-888 (SASNTSTTPPNGSSASS) are enriched in low complexity. Positions 918 to 935 (HAQTSAGTCETSLSTQPQ) are enriched in polar residues. The segment covering 941 to 954 (TGAIATSATASGSN) has biased composition (low complexity). Residues 968–977 (SNTTTHSAST) show a composition bias toward polar residues.

The protein belongs to the FHIP family.

The sequence is that of FHIP family protein GE18198 from Drosophila yakuba (Fruit fly).